The following is a 310-amino-acid chain: Nodulation protein D 2 (310 aa).

Residues 6–63 enclose the HTH lysR-type domain; it reads LDLNLLVALDALMTERKLTAAARRVKLSQPAMSAAIARLRTYFGDELFSMQGRELIPT. Residues 23 to 42 constitute a DNA-binding region (H-T-H motif); it reads LTAAARRVKLSQPAMSAAIA.

This sequence belongs to the LysR transcriptional regulatory family.

Functionally, nodD regulates the expression of the nodABCFE genes which encode other nodulation proteins. NodD is also a negative regulator of its own expression. Binds flavonoids as inducers. The sequence is that of Nodulation protein D 2 (nodD2) from Rhizobium meliloti (strain 1021) (Ensifer meliloti).